We begin with the raw amino-acid sequence, 631 residues long: Probable potassium transport system protein Kup (631 aa).

The next 12 helical transmembrane spans lie at 17 to 37 (IGLL…SPLY), 56 to 76 (ILGV…FKYM), 109 to 129 (MMMV…SMIT), 147 to 167 (GLDH…FLIQ), 174 to 194 (IGVL…ALGV), 215 to 235 (FFII…LALT), 256 to 276 (WFIL…ALVL), 288 to 308 (LLAP…ATII), 346 to 366 (IYIG…VIGF), 378 to 398 (VAVT…MLML), 403 to 423 (PLLA…FFAA), and 428 to 448 (IFQG…LMTT).

This sequence belongs to the HAK/KUP transporter (TC 2.A.72) family.

It is found in the cell inner membrane. The catalysed reaction is K(+)(in) + H(+)(in) = K(+)(out) + H(+)(out). Transport of potassium into the cell. Likely operates as a K(+):H(+) symporter. The sequence is that of Probable potassium transport system protein Kup from Pseudomonas savastanoi pv. phaseolicola (strain 1448A / Race 6) (Pseudomonas syringae pv. phaseolicola (strain 1448A / Race 6)).